Reading from the N-terminus, the 451-residue chain is UPF0210 protein CLL_A1718 (451 aa).

The protein belongs to the UPF0210 family. In terms of assembly, homodimer.

The chain is UPF0210 protein CLL_A1718 from Clostridium botulinum (strain Eklund 17B / Type B).